The primary structure comprises 196 residues: Peroxynitrite isomerase (196 aa).

The tract at residues 1–29 (MSDENPLQPPWLNAPPVDPYPYEESHDLR) is disordered. Positions 7–19 (LQPPWLNAPPVDP) are enriched in pro residues. Positions 46-52 (GVWRGRG) match the GXWXGXG motif. Position 186 (His-186) interacts with heme b.

The protein belongs to the nitrobindin family. In terms of assembly, homodimer. The cofactor is heme b.

The catalysed reaction is peroxynitrite = nitrate. Its pathway is nitrogen metabolism. Heme-binding protein able to scavenge peroxynitrite and to protect free L-tyrosine against peroxynitrite-mediated nitration, by acting as a peroxynitrite isomerase that converts peroxynitrite to nitrate. Therefore, this protein likely plays a role in peroxynitrite sensing and in the detoxification of reactive nitrogen and oxygen species (RNS and ROS, respectively). Is able to bind nitric oxide (NO) in vitro, but may act as a sensor of peroxynitrite levels in vivo. This chain is Peroxynitrite isomerase, found in Salinispora arenicola (strain CNS-205).